The primary structure comprises 185 residues: Elongation factor P (185 aa).

The protein belongs to the elongation factor P family.

It localises to the cytoplasm. The protein operates within protein biosynthesis; polypeptide chain elongation. Involved in peptide bond synthesis. Stimulates efficient translation and peptide-bond synthesis on native or reconstituted 70S ribosomes in vitro. Probably functions indirectly by altering the affinity of the ribosome for aminoacyl-tRNA, thus increasing their reactivity as acceptors for peptidyl transferase. The protein is Elongation factor P of Bacillus cereus (strain 03BB102).